Consider the following 192-residue polypeptide: MELASGTTLVAPQPKGILDPATGKPIGSNDAFFGEINNELADKGFLVTSTDELITWARTGSLMWMTFGLACCAVEMMQMSMPRYDAERFGFAPRASPRQSDVMIVAGTLTNKMAPALRKVYDQMPEPRYVISMGSCANGGGYYHYSYSVVRGCDRVVPVDIYVPGCPPTAEALLYGVLLLQKKIRRTGTIER.

Cys71, Cys72, Cys136, and Cys166 together coordinate [4Fe-4S] cluster.

Belongs to the complex I 20 kDa subunit family. NDH-1 is composed of 14 different subunits. Subunits NuoB, C, D, E, F, and G constitute the peripheral sector of the complex. Requires [4Fe-4S] cluster as cofactor.

It is found in the cell inner membrane. The enzyme catalyses a quinone + NADH + 5 H(+)(in) = a quinol + NAD(+) + 4 H(+)(out). In terms of biological role, NDH-1 shuttles electrons from NADH, via FMN and iron-sulfur (Fe-S) centers, to quinones in the respiratory chain. The immediate electron acceptor for the enzyme in this species is believed to be ubiquinone. Couples the redox reaction to proton translocation (for every two electrons transferred, four hydrogen ions are translocated across the cytoplasmic membrane), and thus conserves the redox energy in a proton gradient. This is NADH-quinone oxidoreductase subunit B from Sinorhizobium medicae (strain WSM419) (Ensifer medicae).